A 350-amino-acid polypeptide reads, in one-letter code: Renin receptor (350 aa).

The first 17 residues, 1 to 17, serve as a signal peptide directing secretion; the sequence is MAVLVVLLFFLVAGALG. The Extracellular segment spans residues 18 to 302; sequence NEFSILRSPG…YNLAYKYNLE (285 aa). The chain crosses the membrane as a helical span at residues 303-323; that stretch reads YSVVFNLVLWIMIGLALAVII. Topologically, residues 324–350 are cytoplasmic; sequence TSYNIWNMDPGYDSIIYRMTNQKIRID. Residues 346–350 carry the Mediates retrograde transport to the ER motif; that stretch reads KIRID.

Interacts with renin. Accessory component of the multisubunit proton-transporting vacuolar (V)-ATPase protein pump. Interacts (via N-terminus) with ATP6AP1 (via N-terminus). Interacts with ATP6V0D1; ATP6V0D1 is a V-ATPase complex subunit and the interaction promotes V-ATPase complex assembly. Interacts with TMEM9; TMEM9 is a V-ATPase assembly regulator and the interaction induces the interaction with ATP6V0D1. Interacts with VMA21 (via N-terminus); VMA21 is a V-ATPase accessory component. Phosphorylated. In terms of processing, proteolytically cleaved by a furin-like convertase in the trans-Golgi network to generate N- and C-terminal fragments. As to expression, expressed in glutamatergic and GABAergic neurons with highest levels in the cortex, the hippocampus, the medial habenular nucleus, the cerebellum, the medulla and the olfactory bulb (at protein level).

The protein localises to the endoplasmic reticulum membrane. It localises to the lysosome membrane. Its subcellular location is the cytoplasmic vesicle. The protein resides in the autophagosome membrane. It is found in the cell projection. The protein localises to the dendritic spine membrane. It localises to the axon. Its subcellular location is the endosome membrane. The protein resides in the clathrin-coated vesicle membrane. It is found in the secretory vesicle. The protein localises to the synaptic vesicle membrane. In terms of biological role, multifunctional protein which functions as a renin, prorenin cellular receptor and is involved in the assembly of the lysosomal proton-transporting V-type ATPase (V-ATPase) and the acidification of the endo-lysosomal system. May mediate renin-dependent cellular responses by activating ERK1 and ERK2. By increasing the catalytic efficiency of renin in AGT/angiotensinogen conversion to angiotensin I, may also play a role in the renin-angiotensin system (RAS). Through its function in V-type ATPase (v-ATPase) assembly and acidification of the lysosome it regulates protein degradation and may control different signaling pathways important for proper brain development, synapse morphology and synaptic transmission. The chain is Renin receptor from Mus musculus (Mouse).